We begin with the raw amino-acid sequence, 324 residues long: Interleukin-12 subunit beta (324 aa).

Residues 1-22 (MHLQQLVVSWFSLVWLASPIVA) form the signal peptide. The 84-residue stretch at 23 to 106 (IWELEKNVYV…LSQSLLLLHK (84 aa)) folds into the Ig-like C2-type domain. A disulfide bridge connects residues C50 and C90. N125, N135, and N218 each carry an N-linked (GlcNAc...) asparagine glycan. One can recognise a Fibronectin type-III domain in the interval 233–324 (PPKNLQLNPL…WSEWASVSCN (92 aa)).

This sequence belongs to the IL-12B family. Heterodimer with IL12A; disulfide-linked. The heterodimer is known as interleukin IL-12. Heterodimer with IL23A; disulfide-linked. The heterodimer is known as interleukin IL-23. Also secreted as a monomer. Interacts with NBR1; this interaction promotes IL-12 secretion.

It is found in the secreted. Functionally, cytokine that can act as a growth factor for activated T and NK cells, enhance the lytic activity of NK/lymphokine-activated killer cells, and stimulate the production of IFN-gamma by resting PBMC. Its function is as follows. Associates with IL23A to form the IL-23 interleukin, a heterodimeric cytokine which functions in innate and adaptive immunity. IL-23 may constitute with IL-17 an acute response to infection in peripheral tissues. IL-23 binds to a heterodimeric receptor complex composed of IL12RB1 and IL23R, activates the Jak-Stat signaling cascade, stimulates memory rather than naive T-cells and promotes production of pro-inflammatory cytokines. IL-23 induces autoimmune inflammation and thus may be responsible for autoimmune inflammatory diseases and may be important for tumorigenesis. This Sus scrofa (Pig) protein is Interleukin-12 subunit beta (IL12B).